A 422-amino-acid chain; its full sequence is S-adenosylmethionine synthase (422 aa).

His-16 is an ATP binding site. A Mg(2+)-binding site is contributed by Asp-18. Glu-44 is a K(+) binding site. Residues Glu-57 and Gln-100 each contribute to the L-methionine site. Residues 100–110 (QSPDISQGVSA) form a flexible loop region. Residues 175–177 (DGK), 251–252 (KF), Asp-260, 266–267 (RK), Ala-283, and Lys-287 each bind ATP. Position 260 (Asp-260) interacts with L-methionine. Residue Lys-291 coordinates L-methionine.

Belongs to the AdoMet synthase family. In terms of assembly, homotetramer; dimer of dimers. It depends on Mg(2+) as a cofactor. The cofactor is K(+).

It is found in the cytoplasm. It catalyses the reaction L-methionine + ATP + H2O = S-adenosyl-L-methionine + phosphate + diphosphate. The protein operates within amino-acid biosynthesis; S-adenosyl-L-methionine biosynthesis; S-adenosyl-L-methionine from L-methionine: step 1/1. In terms of biological role, catalyzes the formation of S-adenosylmethionine (AdoMet) from methionine and ATP. The overall synthetic reaction is composed of two sequential steps, AdoMet formation and the subsequent tripolyphosphate hydrolysis which occurs prior to release of AdoMet from the enzyme. This is S-adenosylmethionine synthase from Rippkaea orientalis (strain PCC 8801 / RF-1) (Cyanothece sp. (strain PCC 8801)).